We begin with the raw amino-acid sequence, 491 residues long: 3-octaprenyl-4-hydroxybenzoate carboxy-lyase (491 aa).

A Mn(2+)-binding site is contributed by N172. Residues 175 to 177, 189 to 191, and 194 to 195 each bind prenylated FMN; these read IYR, RWL, and RG. Mn(2+) is bound at residue E238. The Proton donor role is filled by D287.

This sequence belongs to the UbiD family. As to quaternary structure, homohexamer. Prenylated FMN serves as cofactor. Mn(2+) is required as a cofactor.

Its subcellular location is the cell membrane. The enzyme catalyses a 4-hydroxy-3-(all-trans-polyprenyl)benzoate + H(+) = a 2-(all-trans-polyprenyl)phenol + CO2. It participates in cofactor biosynthesis; ubiquinone biosynthesis. Its function is as follows. Catalyzes the decarboxylation of 3-octaprenyl-4-hydroxy benzoate to 2-octaprenylphenol, an intermediate step in ubiquinone biosynthesis. This Klebsiella pneumoniae subsp. pneumoniae (strain ATCC 700721 / MGH 78578) protein is 3-octaprenyl-4-hydroxybenzoate carboxy-lyase.